Here is a 192-residue protein sequence, read N- to C-terminus: Rhomboid protease GlpG (192 aa).

The Cytoplasmic portion of the chain corresponds to 1–10 (MKNFLAQQGK). The chain crosses the membrane as a helical span at residues 11–31 (ITLILTALCVLIYLAQQLGFE). Topologically, residues 32–57 (DDIMYLMHYPAYEEQDSEVWRYISHT) are periplasmic. The chain crosses the membrane as a helical span at residues 58–78 (LVHLSNLHILFNLSWFFIFGG). Topologically, residues 79–82 (MIER) are cytoplasmic. Residues 83-103 (TFGSVKLLMLYVVASAITGYV) form a helical membrane-spanning segment. Over 104-107 (QNYV) the chain is Periplasmic. The chain crosses the membrane as a helical span at residues 108-128 (SGPAFFGLSGVVYAVLGYVFI). Serine 116 (nucleophile) is an active-site residue. The Cytoplasmic segment spans residues 129–141 (RDKLNHHLFDLPE). The helical transmembrane segment at 142-162 (GFFTMLLVGIALGFISPLFGV) threads the bilayer. Glutamate 163 is a topological domain (periplasmic). Residues 164-184 (MGNAAHISGLIVGLIWGFIDS) traverse the membrane as a helical segment. The active site involves histidine 169. The Cytoplasmic segment spans residues 185-192 (KLRKNSLE).

This sequence belongs to the peptidase S54 family.

The protein resides in the cell inner membrane. The enzyme catalyses Cleaves type-1 transmembrane domains using a catalytic dyad composed of serine and histidine that are contributed by different transmembrane domains.. Functionally, rhomboid-type serine protease that catalyzes intramembrane proteolysis. The chain is Rhomboid protease GlpG (glpG) from Haemophilus influenzae (strain ATCC 51907 / DSM 11121 / KW20 / Rd).